The primary structure comprises 303 residues: Pyridoxal 5'-phosphate synthase subunit PdxS (303 aa).

Asp-33 provides a ligand contact to D-ribose 5-phosphate. Catalysis depends on Lys-90, which acts as the Schiff-base intermediate with D-ribose 5-phosphate. Residue Gly-162 participates in D-ribose 5-phosphate binding. Arg-174 is a binding site for D-glyceraldehyde 3-phosphate. Residues Gly-223 and 244 to 245 (GS) each bind D-ribose 5-phosphate.

This sequence belongs to the PdxS/SNZ family. In the presence of PdxT, forms a dodecamer of heterodimers.

The catalysed reaction is aldehydo-D-ribose 5-phosphate + D-glyceraldehyde 3-phosphate + L-glutamine = pyridoxal 5'-phosphate + L-glutamate + phosphate + 3 H2O + H(+). It functions in the pathway cofactor biosynthesis; pyridoxal 5'-phosphate biosynthesis. Functionally, catalyzes the formation of pyridoxal 5'-phosphate from ribose 5-phosphate (RBP), glyceraldehyde 3-phosphate (G3P) and ammonia. The ammonia is provided by the PdxT subunit. Can also use ribulose 5-phosphate and dihydroxyacetone phosphate as substrates, resulting from enzyme-catalyzed isomerization of RBP and G3P, respectively. The polypeptide is Pyridoxal 5'-phosphate synthase subunit PdxS (Streptomyces coelicolor (strain ATCC BAA-471 / A3(2) / M145)).